Consider the following 578-residue polypeptide: Proline--tRNA ligase (578 aa).

The protein belongs to the class-II aminoacyl-tRNA synthetase family. ProS type 1 subfamily. In terms of assembly, homodimer.

The protein resides in the cytoplasm. The catalysed reaction is tRNA(Pro) + L-proline + ATP = L-prolyl-tRNA(Pro) + AMP + diphosphate. Functionally, catalyzes the attachment of proline to tRNA(Pro) in a two-step reaction: proline is first activated by ATP to form Pro-AMP and then transferred to the acceptor end of tRNA(Pro). As ProRS can inadvertently accommodate and process non-cognate amino acids such as alanine and cysteine, to avoid such errors it has two additional distinct editing activities against alanine. One activity is designated as 'pretransfer' editing and involves the tRNA(Pro)-independent hydrolysis of activated Ala-AMP. The other activity is designated 'posttransfer' editing and involves deacylation of mischarged Ala-tRNA(Pro). The misacylated Cys-tRNA(Pro) is not edited by ProRS. This Syntrophus aciditrophicus (strain SB) protein is Proline--tRNA ligase.